A 420-amino-acid polypeptide reads, in one-letter code: Xyloglucan O-acetyltransferase 4 (420 aa).

The Cytoplasmic portion of the chain corresponds to 1–30; sequence MTMHEKMKLPSCSCSAFKCGKKDRWLNMER. The helical; Signal-anchor for type II membrane protein transmembrane segment at 31–51 threads the bilayer; sequence PIPFLLIGLTTILSVFILYTL. The Lumenal segment spans residues 52-420; the sequence is NPLKFVIEHN…LLLAVLRRLD (369 aa). 4 disulfide bridges follow: C78-C128, C99-C164, C108-C400, and C323-C396. N96 carries an N-linked (GlcNAc...) asparagine glycan. The short motif at 151-153 is the GDS motif element; the sequence is GDS. S153 functions as the Nucleophile in the catalytic mechanism. Residues N192, N212, N270, and N324 are each glycosylated (N-linked (GlcNAc...) asparagine). D395 (proton donor) is an active-site residue. The DXXH motif motif lies at 395–398; sequence DCVH. H398 (proton acceptor) is an active-site residue.

It belongs to the PC-esterase family. TBL subfamily.

It localises to the golgi apparatus membrane. Xyloglucan acetyltransferase that catalyzes the acetylation of fucosylated Gal residues on xyloglucan side chains. Predominantly catalyze 6-O-monoacetylation of Gal residues in the Fuc-Gal-Xyl trisaccharide side chains of xyloglucan oligomers. This Populus trichocarpa (Western balsam poplar) protein is Xyloglucan O-acetyltransferase 4.